A 127-amino-acid chain; its full sequence is Large ribosomal subunit protein bL19 (127 aa).

This sequence belongs to the bacterial ribosomal protein bL19 family.

Its function is as follows. This protein is located at the 30S-50S ribosomal subunit interface and may play a role in the structure and function of the aminoacyl-tRNA binding site. The chain is Large ribosomal subunit protein bL19 from Ruegeria pomeroyi (strain ATCC 700808 / DSM 15171 / DSS-3) (Silicibacter pomeroyi).